We begin with the raw amino-acid sequence, 33 residues long: MLITLGWASLAALFSFSIAMVVWGRNGDGSMNF.

A helical membrane pass occupies residues 2 to 22; it reads LITLGWASLAALFSFSIAMVV.

This sequence belongs to the PetN family. The 4 large subunits of the cytochrome b6-f complex are cytochrome b6, subunit IV (17 kDa polypeptide, PetD), cytochrome f and the Rieske protein, while the 4 small subunits are PetG, PetL, PetM and PetN. The complex functions as a dimer.

The protein localises to the plastid. It localises to the organellar chromatophore thylakoid membrane. Component of the cytochrome b6-f complex, which mediates electron transfer between photosystem II (PSII) and photosystem I (PSI), cyclic electron flow around PSI, and state transitions. The polypeptide is Cytochrome b6-f complex subunit 8 (Paulinella chromatophora).